A 503-amino-acid chain; its full sequence is Glycosyltransferase family 92 protein ZK381.2 (503 aa).

The chain crosses the membrane as a helical span at residues 7–27; the sequence is YKPCLLIILIFNSVILLFILI. The GT92 domain maps to 156–441; it reads KPVIICISPQ…FKCYFDSFYK (286 aa).

This sequence belongs to the glycosyltransferase 92 family.

It localises to the membrane. This chain is Glycosyltransferase family 92 protein ZK381.2, found in Caenorhabditis elegans.